We begin with the raw amino-acid sequence, 108 residues long: Small ribosomal subunit protein bS18c (108 aa).

Composition is skewed to basic residues over residues M1–L19 and R97–N108. Disordered stretches follow at residues M1–G23 and Q83–N108.

It belongs to the bacterial ribosomal protein bS18 family. In terms of assembly, part of the 30S ribosomal subunit.

The protein localises to the plastid. The protein resides in the chloroplast. This is Small ribosomal subunit protein bS18c from Illicium oligandrum (Star anise).